A 699-amino-acid chain; its full sequence is SPS-sensor serine protease component SSY5 (699 aa).

Disordered regions lie at residues 1–113 (MVRF…LQGF) and 129–158 (VKEE…GNAR). The propeptide occupies 1 to 381 (MVRFFGLNKE…YCVKDYIKKA (381 aa)). Basic and acidic residues predominate over residues 8 to 18 (NKEKNEEKENT). Positions 24 to 38 (NEQNAAETSSSNVSG) are enriched in polar residues. Residues 39–51 (NEERIDPNSRDTN) show a composition bias toward basic and acidic residues. Residues 61 to 78 (STTFGSSIQSSSIFSRGR) show a composition bias toward low complexity. Over residues 83 to 93 (TGASSSMATSE) the composition is skewed to polar residues. The segment covering 144-154 (SSSTSSTLATS) has biased composition (low complexity). The interval 459 to 699 (FAITCAHVVL…QWDIDPQLDG (241 aa)) is serine protease. Catalysis depends on charge relay system residues His465, Asp545, and Ser640.

Belongs to the peptidase S64 family. As to quaternary structure, component of the plasma membrane SPS (SSY1-PTR3-SSY5) amino acid sensor complex. Post-translationally, the propeptide is autoproteolytically cleaved from the catalytic domain but remains associated, forming an inactive protease complex. This processing occurs even in the absence of signaling.

Its subcellular location is the cell membrane. In terms of biological role, protease component of the SPS-sensor system, which regulates the expression of several amino acid-metabolizing enzymes and amino acid- and peptide-permeases in response to extracellular amino acid levels by controlling the activity of two transcription factors, STP1 and STP2. Catalyzes the activation of these transcription factors, which are synthesized as latent cytoplasmic precursors, by proteolytic removal of an N-terminal inhibitory domain containing cytoplasmic retention motifs. SSY5 binds as an inactive protease complex to STP1. In response to extracellular amino acids and dependent on the other SPS-sensor components, the inhibitory propeptide is induced to dissociate, and thereby enables the catalytic domain to process STP1. In Saccharomyces cerevisiae (strain AWRI1631) (Baker's yeast), this protein is SPS-sensor serine protease component SSY5 (SSY5).